The primary structure comprises 192 residues: Ion-translocating oxidoreductase complex subunit B (192 aa).

The hydrophobic stretch occupies residues 1–26 (MNAIWIAVAAVSLLGLAFGAILGYAS). A 4Fe-4S domain is found at 32 to 91 (EDDPVVEKIDEILPQSQCGQCGYPGCRPYAEAISCNGEKINRCAPGGEAVMLKIAELLNV). [4Fe-4S] cluster-binding residues include cysteine 49, cysteine 52, cysteine 57, cysteine 74, cysteine 117, cysteine 120, cysteine 123, cysteine 127, cysteine 147, cysteine 150, cysteine 153, and cysteine 157. 2 consecutive 4Fe-4S ferredoxin-type domains span residues 108–137 (MVAV…GATR) and 138–167 (AMHT…LQPV).

This sequence belongs to the 4Fe4S bacterial-type ferredoxin family. RnfB subfamily. In terms of assembly, the complex is composed of six subunits: RsxA, RsxB, RsxC, RsxD, RsxE and RsxG. [4Fe-4S] cluster serves as cofactor.

It localises to the cell inner membrane. Its function is as follows. Part of a membrane-bound complex that couples electron transfer with translocation of ions across the membrane. Required to maintain the reduced state of SoxR. The protein is Ion-translocating oxidoreductase complex subunit B of Shigella dysenteriae serotype 1 (strain Sd197).